The chain runs to 250 residues: Ribonuclease 3 (250 aa).

Residues 1 to 15 (MTKTPAKKKRARSSK) are compositionally biased toward basic residues. The segment at 1-21 (MTKTPAKKKRARSSKAKGTDA) is disordered. In terms of domain architecture, RNase III spans 22 to 150 (NAALEARIGH…VIGAIFLDGG (129 aa)). Residue glutamate 63 participates in Mg(2+) binding. Aspartate 67 is an active-site residue. Residues aspartate 136 and glutamate 139 each coordinate Mg(2+). The active site involves glutamate 139. One can recognise a DRBM domain in the interval 175–244 (DPKTVLQEWA…ASVMIEREGV (70 aa)).

The protein belongs to the ribonuclease III family. In terms of assembly, homodimer. Mg(2+) serves as cofactor.

It is found in the cytoplasm. It carries out the reaction Endonucleolytic cleavage to 5'-phosphomonoester.. In terms of biological role, digests double-stranded RNA. Involved in the processing of primary rRNA transcript to yield the immediate precursors to the large and small rRNAs (23S and 16S). Processes some mRNAs, and tRNAs when they are encoded in the rRNA operon. Processes pre-crRNA and tracrRNA of type II CRISPR loci if present in the organism. The chain is Ribonuclease 3 from Bradyrhizobium diazoefficiens (strain JCM 10833 / BCRC 13528 / IAM 13628 / NBRC 14792 / USDA 110).